A 393-amino-acid polypeptide reads, in one-letter code: Phosphoglycerate kinase (393 aa).

Substrate contacts are provided by residues 21 to 23 (DFN), R37, 60 to 63 (HLGR), R119, and R152. ATP-binding positions include K202, G291, E322, and 348 to 351 (GGDT).

It belongs to the phosphoglycerate kinase family. In terms of assembly, monomer.

The protein resides in the cytoplasm. It carries out the reaction (2R)-3-phosphoglycerate + ATP = (2R)-3-phospho-glyceroyl phosphate + ADP. It functions in the pathway carbohydrate degradation; glycolysis; pyruvate from D-glyceraldehyde 3-phosphate: step 2/5. This chain is Phosphoglycerate kinase, found in Coprothermobacter proteolyticus (strain ATCC 35245 / DSM 5265 / OCM 4 / BT).